A 134-amino-acid polypeptide reads, in one-letter code: ATP synthase epsilon chain (134 aa).

The protein belongs to the ATPase epsilon chain family. As to quaternary structure, F-type ATPases have 2 components, CF(1) - the catalytic core - and CF(0) - the membrane proton channel. CF(1) has five subunits: alpha(3), beta(3), gamma(1), delta(1), epsilon(1). CF(0) has three main subunits: a, b and c.

The protein resides in the cell inner membrane. In terms of biological role, produces ATP from ADP in the presence of a proton gradient across the membrane. The polypeptide is ATP synthase epsilon chain (Nitratidesulfovibrio vulgaris (strain DSM 19637 / Miyazaki F) (Desulfovibrio vulgaris)).